The chain runs to 241 residues: Adenosylcobinamide-GDP ribazoletransferase (241 aa).

Transmembrane regions (helical) follow at residues 34 to 54 (LGLP…AWAF), 108 to 128 (VGGL…FGWI), 184 to 206 (LPFS…WTCL), and 220 to 240 (FLGA…SSLP).

Belongs to the CobS family. Mg(2+) serves as cofactor.

The protein localises to the cell membrane. The catalysed reaction is alpha-ribazole + adenosylcob(III)inamide-GDP = adenosylcob(III)alamin + GMP + H(+). It carries out the reaction alpha-ribazole 5'-phosphate + adenosylcob(III)inamide-GDP = adenosylcob(III)alamin 5'-phosphate + GMP + H(+). It participates in cofactor biosynthesis; adenosylcobalamin biosynthesis; adenosylcobalamin from cob(II)yrinate a,c-diamide: step 7/7. In terms of biological role, joins adenosylcobinamide-GDP and alpha-ribazole to generate adenosylcobalamin (Ado-cobalamin). Also synthesizes adenosylcobalamin 5'-phosphate from adenosylcobinamide-GDP and alpha-ribazole 5'-phosphate. The chain is Adenosylcobinamide-GDP ribazoletransferase from Methanopyrus kandleri (strain AV19 / DSM 6324 / JCM 9639 / NBRC 100938).